The following is an 89-amino-acid chain: Small ribosomal subunit protein uS15 (89 aa).

Belongs to the universal ribosomal protein uS15 family. Part of the 30S ribosomal subunit. Forms a bridge to the 50S subunit in the 70S ribosome, contacting the 23S rRNA.

Its function is as follows. One of the primary rRNA binding proteins, it binds directly to 16S rRNA where it helps nucleate assembly of the platform of the 30S subunit by binding and bridging several RNA helices of the 16S rRNA. Forms an intersubunit bridge (bridge B4) with the 23S rRNA of the 50S subunit in the ribosome. This Nitratidesulfovibrio vulgaris (strain DSM 19637 / Miyazaki F) (Desulfovibrio vulgaris) protein is Small ribosomal subunit protein uS15.